Consider the following 72-residue polypeptide: Conotoxin Vc6.16 (72 aa).

An N-terminal signal peptide occupies residues 1-19; the sequence is MQKLIILLLVAAVLMSTQA. A propeptide spanning residues 20–44 is cleaved from the precursor; that stretch reads LFQEKRPKEKIDLLSKRKTDAEKQQ. 3 cysteine pairs are disulfide-bonded: Cys48–Cys62, Cys55–Cys66, and Cys61–Cys71.

The protein belongs to the conotoxin O2 superfamily. As to expression, expressed by the venom duct.

It is found in the secreted. Its function is as follows. Inhibits voltage-gated ion channels. The chain is Conotoxin Vc6.16 from Conus victoriae (Queen Victoria cone).